The following is a 701-amino-acid chain: ABC transporter G family member 23 (701 aa).

In terms of domain architecture, ABC transporter spans 7-237 (INLNNVSRSY…YECSLLEDVY (231 aa)). 39–46 (GSSGSGKT) is a binding site for ATP. 6 helical membrane passes run 335–355 (FPLVFEIISPSLLITLFFLAI), 493–513 (FLAPAMICIITYVHCMNFLSI), 541–561 (HILAHIPILLVQFSIQLLIAV), 574–596 (LIYLFFILINTVGMCQGILISLI), 608–628 (LAIFICSLCMAGIIWPTEAII), and 665–685 (LIIIISYIIGTFSLIVISTPI). In terms of domain architecture, ABC transmembrane type-2 spans 459–686 (FQKAFNKIAN…SLIVISTPIG (228 aa)).

The protein belongs to the ABC transporter superfamily. ABCG family.

Its subcellular location is the membrane. The sequence is that of ABC transporter G family member 23 (abcG23) from Dictyostelium discoideum (Social amoeba).